The chain runs to 973 residues: Valine--tRNA ligase (973 aa).

Residues 57-67 (PNVTGSLHMGH) carry the 'HIGH' region motif. A 'KMSKS' region motif is present at residues 569 to 573 (KMSKS). Residue Lys-572 coordinates ATP. The stretch at 901–970 (MAGLIDKEAE…AKILEQKIQI (70 aa)) forms a coiled coil.

This sequence belongs to the class-I aminoacyl-tRNA synthetase family. ValS type 1 subfamily. In terms of assembly, monomer.

The protein localises to the cytoplasm. It catalyses the reaction tRNA(Val) + L-valine + ATP = L-valyl-tRNA(Val) + AMP + diphosphate. In terms of biological role, catalyzes the attachment of valine to tRNA(Val). As ValRS can inadvertently accommodate and process structurally similar amino acids such as threonine, to avoid such errors, it has a 'posttransfer' editing activity that hydrolyzes mischarged Thr-tRNA(Val) in a tRNA-dependent manner. This is Valine--tRNA ligase from Colwellia psychrerythraea (strain 34H / ATCC BAA-681) (Vibrio psychroerythus).